Here is a 249-residue protein sequence, read N- to C-terminus: tRNA pseudouridine synthase A (249 aa).

Catalysis depends on Asp53, which acts as the Nucleophile. Substrate is bound at residue Tyr111.

The protein belongs to the tRNA pseudouridine synthase TruA family. As to quaternary structure, homodimer.

The enzyme catalyses uridine(38/39/40) in tRNA = pseudouridine(38/39/40) in tRNA. Its function is as follows. Formation of pseudouridine at positions 38, 39 and 40 in the anticodon stem and loop of transfer RNAs. In Streptococcus pneumoniae (strain Taiwan19F-14), this protein is tRNA pseudouridine synthase A.